Reading from the N-terminus, the 465-residue chain is MKVYNTLTNKKEEFLTLVPGEVKMYVCGPTVYNFFHIGNARTFVVFDTIRRYLEYRGYKVKFIQNFTDIDDKMIKRANEEGSTVKELGDRFIKEYYKDADDLNIERATKNPRATEFMEEIIKFVSDLIEKGYAYEIDGDVYFSTKKFNSYGKLSGQNLEELQLGARINVDERKKDPMDFAIWKSQKPGEPAWESPWGMGRPGWHIECSCMAYNLLGETIDIHAGGSDLSFPHHENEIAQSEARTGKQFAKYWLHSAFVNVNNQKMSKSLNNFFTAREILEKYDADVLRMFMLSGHYRTQINFSMELLDSTKAALDRLYNSINNLENLLDEVKNEELRDEELEYKNELQKYKEKYIEKMDDDFNTADAISIIFDLIRDVNTNVTIESSKELVKYTLDLIRELGSPLGILQESTKASLEEEIEKLIEERQKARKEKNWALADKIRDNLKERGIVLEDTPQGIRWKQI.

Cys-27 contributes to the Zn(2+) binding site. The short motif at 29 to 39 (PTVYNFFHIGN) is the 'HIGH' region element. Residues Cys-207, His-232, and Glu-236 each contribute to the Zn(2+) site. The 'KMSKS' region motif lies at 264–268 (KMSKS). Lys-267 provides a ligand contact to ATP.

It belongs to the class-I aminoacyl-tRNA synthetase family. As to quaternary structure, monomer. Requires Zn(2+) as cofactor.

The protein localises to the cytoplasm. The enzyme catalyses tRNA(Cys) + L-cysteine + ATP = L-cysteinyl-tRNA(Cys) + AMP + diphosphate. This chain is Cysteine--tRNA ligase, found in Clostridium botulinum (strain ATCC 19397 / Type A).